Here is a 478-residue protein sequence, read N- to C-terminus: GMP reductase (478 aa).

2 CBS domains span residues 95–152 and 153–211; these read VVDT…VRDI and ALSD…AVDA. NADP(+) is bound by residues 245-247 and 295-297; these read DTA and GVG. Catalysis depends on Cys-302, which acts as the Thioimidate intermediate.

Belongs to the IMPDH/GMPR family. GuaB1 subfamily. As to quaternary structure, homooctamer composed of two tetramers. The oligomerization state is regulated by ligands and pH. A monovalent cation is required as a cofactor.

The enzyme catalyses IMP + NH4(+) + NADP(+) = GMP + NADPH + 2 H(+). It functions in the pathway purine metabolism; IMP biosynthesis via salvage pathway. Activity is allosterically regulated by the ATP/GTP ratio in a pH-dependent manner. At pH 7.8, GTP has only a minor positive effect and ATP only a minor negative effect on the activity, however, at lower pH values, the effects of ATP and GTP increase. ATP-dependent inhibition can be restored by increasing GTP concentration. IMP and XMP are competitive inhibitors. In terms of biological role, involved in the purine-salvage pathway. Catalyzes the NADPH-dependent conversion of GMP to IMP. Is not essential for viability, but may contribute to the regulation of the purine nucleotide pool by recycling GMP to IMP. The chain is GMP reductase from Mycolicibacterium smegmatis (strain ATCC 700084 / mc(2)155) (Mycobacterium smegmatis).